Here is a 343-residue protein sequence, read N- to C-terminus: Protein RecA (343 aa).

65–72 (GPESSGKT) is a binding site for ATP.

It belongs to the RecA family.

The protein localises to the cytoplasm. Can catalyze the hydrolysis of ATP in the presence of single-stranded DNA, the ATP-dependent uptake of single-stranded DNA by duplex DNA, and the ATP-dependent hybridization of homologous single-stranded DNAs. It interacts with LexA causing its activation and leading to its autocatalytic cleavage. In Campylobacter jejuni subsp. jejuni serotype O:6 (strain 81116 / NCTC 11828), this protein is Protein RecA.